A 180-amino-acid polypeptide reads, in one-letter code: MSRIGKLPIKIADSVKVDIKDNFITVEGKRGKLSQEINSSIRVKIEDNNIIVERAFNNKQTRAFHGLYRSLIFNMVKGVSDGFSKSLTINGIGYRVEQQGNSLFFNLGYSTQFEYVIPEGINIRLDGNTKIAVEGIDKCRVGQVAAEIRSLKVPEPYKGKGIKYDNEVIRRKVGKSGVKK.

This sequence belongs to the universal ribosomal protein uL6 family. As to quaternary structure, part of the 50S ribosomal subunit.

This protein binds to the 23S rRNA, and is important in its secondary structure. It is located near the subunit interface in the base of the L7/L12 stalk, and near the tRNA binding site of the peptidyltransferase center. The polypeptide is Large ribosomal subunit protein uL6 (Borrelia recurrentis (strain A1)).